Consider the following 301-residue polypeptide: Probable alpha-L-glutamate ligase (301 aa).

The ATP-grasp domain occupies 104–287 (LQLLSRKGIG…IAGLIVAYME (184 aa)). ATP contacts are provided by residues lysine 141, 178-179 (EF), aspartate 187, and 211-213 (RSN). The Mg(2+) site is built by aspartate 248, glutamate 260, and asparagine 262. Mn(2+) contacts are provided by aspartate 248, glutamate 260, and asparagine 262.

This sequence belongs to the RimK family. The cofactor is Mg(2+). Requires Mn(2+) as cofactor.

This Cellvibrio japonicus (strain Ueda107) (Pseudomonas fluorescens subsp. cellulosa) protein is Probable alpha-L-glutamate ligase.